Here is an 871-residue protein sequence, read N- to C-terminus: MALEQALQAARRGDLDVLRSLHAAGLLGPSLRDSLDALPVHHAARSGKLHCLRYLVEEVALPAVSRARNGATPAHDAAATGYLSCLQWLLTQGGCRVQEKDNSGATVLHLAARFGHPDVVKWLLYQGGANSAITTDTGALPIHYAAAKGDLPSLKLLVGHYPEGVNAQTNNGATPLYLACQEGHLEVTKYLVQECSADPHLRAQDGMTPLHAAAQMGHNPVLVWLVSFADVSFSEQDHDGATAMHFAASRGHTKVLSWLLLHGAEISQDLWGGTPLHDAAENGELECCQILAVNGAGLDVRDHDGYTAADLAEFNGHTHCSRYLRTVQTLSLEHRVLSRDQSMDLEAKQLDSGMSSPNTTMSVQPMTFDLGSPTSTFSNYDSCSSSHSSSKGQRSNRGIPGARAADLQSYMDMLNPEKSLPRGKLGKPSPPPPPPPPPPSFPPPPPPTGTQPPPPPPGYPAPNPPVGLHLNNIYMQTKNKLRHVEVDSLKEPKVELNDQFAQPSSGDGHSGLHRQDSGLLRQDSELLHRQELLRHSTGLRRQDSDRKQRSFSKQPSTGDYYRQLGRSPGEPLAARPGMAHSEEAALLPGNHVHNGCSADSKASRELPPPPPPPPLPEALSSPPPAPPLPIEGAGAACGQRRSSSSTGKVRVLRHRKSTKSFNMMSPTGDNSELLAEIKAGKSLKPTPQSKGLTTVFSGSGQPASQPESPQPLVSPAPSRTRSPTPPASGSQPLLNGSVVPAPPATPAPGVHLDVEALIPTLDEQGRPIPEWKRQVMVRKLQQKMQEEEEQRRKEEEEEARLASLPAWRRDILRKKLEEEREQKRKEEERQKLEEIQRAKEQSEKLRTLGYDEAKLAPWQRQVILKKGEIPK.

ANK repeat units lie at residues 1–31 (MALE…GPSL), 35–66 (LDAL…AVSR), 69–99 (NGAT…RVQE), 103–132 (SGAT…ANSA), 137–167 (TGAL…GVNA), 171–201 (NGAT…DPHL), 205–235 (DGMT…SFSE), 239–268 (DGAT…EISQ), and 271–300 (WGGT…GLDV). Ser-338 and Ser-342 each carry phosphoserine. Disordered stretches follow at residues 349–400 (QLDS…RGIP), 416–469 (PEKS…VGLH), 493–750 (KVEL…APGV), and 819–850 (EREQ…TLGY). Residues 352 to 365 (SGMSSPNTTMSVQP) are compositionally biased toward polar residues. Residues 377–395 (FSNYDSCSSSHSSSKGQRS) are compositionally biased toward low complexity. A compositionally biased stretch (pro residues) spans 428-465 (PSPPPPPPPPPPSFPPPPPPTGTQPPPPPPGYPAPNPP). Phosphoserine occurs at positions 517, 524, and 556. The span at 522 to 548 (QDSELLHRQELLRHSTGLRRQDSDRKQ) shows a compositional bias: basic and acidic residues. A compositionally biased stretch (pro residues) spans 606-629 (LPPPPPPPPLPEALSSPPPAPPLP). Polar residues-rich tracts occupy residues 659–670 (KSFNMMSPTGDN) and 685–707 (PTPQ…SQPE). A Phosphoserine modification is found at Ser-665. The WH2 domain maps to 669–686 (DNSELLAEIKAGKSLKPT). Phosphoserine is present on residues Ser-704, Ser-708, and Ser-714. Residues 772–848 (KRQVMVRKLQ…KEQSEKLRTL (77 aa)) adopt a coiled-coil conformation.

In terms of assembly, monomer. Binds F-actin in a Ca(2+)-resistant fashion. Interacts (via N-terminus) with BAIAP2 (via SH3-domain). Interacts with PFN2. Interacts with MYO3A (via C-terminus). Interacts with MYO3B (via C-terminus). In terms of tissue distribution, expressed at high concentration in the microvillar parallel actin bundle (PAB) of hair cells stereocilia in the cochlea and vestibular system. Detected also at high levels of a number of other sensory cell types, including taste receptor cells, solitary chemoreceptor cells, vomeronasal sensory neurons and Merkel cells. Isoforms 2, 3, 4 and 5 are expressed in Purkinje cells dendritic spines. Expressed in utricle hair bundles (at protein level).

The protein localises to the cytoplasm. It is found in the cytoskeleton. It localises to the cell projection. The protein resides in the stereocilium. Its subcellular location is the microvillus. The protein localises to the cell junction. It is found in the dendritic spine. In terms of biological role, multifunctional actin-bundling protein. Plays a major role in regulating the organization, dimension, dynamics and signaling capacities of the actin filament-rich microvilli in the mechanosensory and chemosensory cells. Required for the assembly and stabilization of the stereociliary parallel actin bundles. Plays a crucial role in the formation and maintenance of inner ear hair cell stereocilia. Involved in the elongation of actin in stereocilia. In extrastriolar hair cells, required for targeting MYO3B to stereocilia tips, and for regulation of stereocilia diameter and staircase formation. This chain is Espin (Espn), found in Mus musculus (Mouse).